We begin with the raw amino-acid sequence, 511 residues long: Ribonuclease Y (511 aa).

Residues 3–23 (VTIVASIACFIVGGILSYVLF) form a helical membrane-spanning segment. In terms of domain architecture, KH spans 201-261 (SVTVFHIESD…VRREIARLAL (61 aa)). In terms of domain architecture, HD spans 327–420 (LLQHARETAN…VQVCDAISGA (94 aa)).

It belongs to the RNase Y family.

The protein localises to the cell membrane. In terms of biological role, endoribonuclease that initiates mRNA decay. This Bacteroides fragilis (strain ATCC 25285 / DSM 2151 / CCUG 4856 / JCM 11019 / LMG 10263 / NCTC 9343 / Onslow / VPI 2553 / EN-2) protein is Ribonuclease Y.